The chain runs to 200 residues: Small ribosomal subunit protein uS4 (200 aa).

Residues 22–43 (TGKELERRPYAPGQHGPTQRKK) form a disordered region. An S4 RNA-binding domain is found at 92 to 170 (QRLDNIVYRL…VPEYVTFDAE (79 aa)).

Belongs to the universal ribosomal protein uS4 family. In terms of assembly, part of the 30S ribosomal subunit. Contacts protein S5. The interaction surface between S4 and S5 is involved in control of translational fidelity.

In terms of biological role, one of the primary rRNA binding proteins, it binds directly to 16S rRNA where it nucleates assembly of the body of the 30S subunit. Functionally, with S5 and S12 plays an important role in translational accuracy. The protein is Small ribosomal subunit protein uS4 of Listeria monocytogenes serotype 4a (strain HCC23).